Consider the following 184-residue polypeptide: Ribose 1,5-bisphosphate phosphokinase PhnN (184 aa).

11–18 (GPSGAGKD) contributes to the ATP binding site.

This sequence belongs to the ribose 1,5-bisphosphokinase family.

The catalysed reaction is alpha-D-ribose 1,5-bisphosphate + ATP = 5-phospho-alpha-D-ribose 1-diphosphate + ADP. It functions in the pathway metabolic intermediate biosynthesis; 5-phospho-alpha-D-ribose 1-diphosphate biosynthesis; 5-phospho-alpha-D-ribose 1-diphosphate from D-ribose 5-phosphate (route II): step 3/3. Functionally, catalyzes the phosphorylation of ribose 1,5-bisphosphate to 5-phospho-D-ribosyl alpha-1-diphosphate (PRPP). The protein is Ribose 1,5-bisphosphate phosphokinase PhnN of Burkholderia mallei (strain SAVP1).